The primary structure comprises 1379 residues: Vascular endothelial growth factor receptor 3 (1379 aa).

The N-terminal stretch at 1–19 (MKRVCTLPLWLWLGIVSEA) is a signal peptide. Residues 20–788 (DLVSSYSMTP…EGSDDKTNVE (769 aa)) lie on the Extracellular side of the membrane. 7 Ig-like C2-type domains span residues 30–136 (PTLS…TAVS), 160–222 (KENT…IDNK), 240–335 (DIQL…TDVI), 340–421 (PFIN…KRIS), 430–566 (PRIH…FYVT), 569–684 (PDGF…KYIS), and 691–777 (PRLK…ASVS). Cystine bridges form between C51–C120 and C167–C215. The segment at 73–93 (RRWNSQPQQRPVGAGNPEEDC) is disordered. Residues N113, N175, N260, and N308 are each glycosylated (N-linked (GlcNAc...) asparagine). Residues C261 and C319 are joined by a disulfide bond. 3 disulfides stabilise this stretch: C453/C548, C474/C500, and C592/C666. N-linked (GlcNAc...) asparagine glycans are attached at residues N529, N541, N596, N608, N655, N696, and N703. A disulfide bridge links C712 with C761. Residue N771 is glycosylated (N-linked (GlcNAc...) asparagine). The chain crosses the membrane as a helical span at residues 789–809 (IVILIGTGVIAVFFWILLIII). At 810–1379 (FCNIKRPAHA…LHASFFSEQY (570 aa)) the chain is on the cytoplasmic side. In terms of domain architecture, Protein kinase spans 858–1185 (LRLGKVLGHG…DLVEILGNLL (328 aa)). Residues 864–872 (LGHGAFGKV) and K892 contribute to the ATP site. Residue D1049 is the Proton acceptor of the active site. Phosphotyrosine; by autocatalysis occurs at positions 1075 and 1080. Residues 1196-1224 (YIPLNDSHSSEDDGFSQVPSSAQQNSDEE) form a disordered region. 5 positions are modified to phosphotyrosine; by autocatalysis: Y1239, Y1240, Y1274, Y1342, and Y1346. The disordered stretch occupies residues 1299-1379 (RHRKEGGFSS…LHASFFSEQY (81 aa)). Residues 1332–1343 (YGSQVGGQTFYN) are compositionally biased toward polar residues.

It belongs to the protein kinase superfamily. Tyr protein kinase family. CSF-1/PDGF receptor subfamily. As to quaternary structure, interacts with VEGFC and VEGFD. Monomer in the absence of bound VEGFC or VEGFD. Homodimer in the presence of bound VEGFC or VEGFD. Autophosphorylated on tyrosine residues upon ligand binding. Autophosphorylation occurs in trans, i.e. one subunit of the dimeric receptor phosphorylates tyrosine residues on the other subunit.

It is found in the cell membrane. The protein resides in the cytoplasm. The protein localises to the nucleus. The enzyme catalyses L-tyrosyl-[protein] + ATP = O-phospho-L-tyrosyl-[protein] + ADP + H(+). With respect to regulation, present in an inactive conformation in the absence of bound ligand. Binding of VEGFC or VEGFD leads to dimerization and activation by autophosphorylation on tyrosine residues. Tyrosine-protein kinase that acts as a cell-surface receptor for VEGFC and VEGFD, and plays an essential role in lymphangiogenesis and in the development of the vascular network and the cardiovascular system during embryonic development. Promotes proliferation, survival and migration of endothelial cells, and regulates angiogenic sprouting. Mediates activation of the MAPK1/ERK2, MAPK3/ERK1 signaling pathway, of MAPK8 and the JUN signaling pathway, and of the AKT1 signaling pathway. This chain is Vascular endothelial growth factor receptor 3 (FLT4), found in Coturnix coturnix (Common quail).